The following is a 300-amino-acid chain: 4-hydroxy-tetrahydrodipicolinate synthase (300 aa).

Residue threonine 55 coordinates pyruvate. Tyrosine 143 acts as the Proton donor/acceptor in catalysis. The active-site Schiff-base intermediate with substrate is the lysine 171. Isoleucine 211 is a pyruvate binding site.

The protein belongs to the DapA family. As to quaternary structure, homotetramer; dimer of dimers.

The protein resides in the cytoplasm. The enzyme catalyses L-aspartate 4-semialdehyde + pyruvate = (2S,4S)-4-hydroxy-2,3,4,5-tetrahydrodipicolinate + H2O + H(+). Its pathway is amino-acid biosynthesis; L-lysine biosynthesis via DAP pathway; (S)-tetrahydrodipicolinate from L-aspartate: step 3/4. In terms of biological role, catalyzes the condensation of (S)-aspartate-beta-semialdehyde [(S)-ASA] and pyruvate to 4-hydroxy-tetrahydrodipicolinate (HTPA). In Mycobacterium leprae (strain Br4923), this protein is 4-hydroxy-tetrahydrodipicolinate synthase.